We begin with the raw amino-acid sequence, 100 residues long: Defensin-6 (100 aa).

A signal peptide spans 1 to 19 (MRTLTILTAVLLVALQAKA). Positions 20 to 68 (EPLQAEDDPLQAKAYEADAQEQRGANDQDFAVSFAEDASSSLRALGSTR) are excised as a propeptide. Cystine bridges form between Cys-72/Cys-99, Cys-74/Cys-88, and Cys-78/Cys-98.

Belongs to the alpha-defensin family. In terms of assembly, homodimer. Self-assembles into higher-order oligomers termed nanonets, fibril-like structures that entrap microbes. Self-assembly into nanonets seems to protect against proteolytic digestion in duodenal fluid. Interacts with Y.enterocolitica invasin and S.typhimurium fliC/flagellin; the interaction creates an anchoring site for progressive DEFA6 self-assembly into nanonets. Proteolytically cleaved by trypsin at Arg-68; the propeptide is stored in the tissue of the small intestine and the mature peptide is found in the luminal fluid; cleavage may occur during or after release into the lumen. The N-terminal propeptide region suppresses self-assembly and renders DEFA6 propeptide unable to agglutinate bacteria and protect human epithelial cells from bacterial invasion. Post-translationally, under reducing conditions, naturally present in the gut owing to the low redox potential or enzymatically generated by the thioredoxin system, the disulfide bridges are opened leading to a conformational change of DEF6, thereby changing its antimicrobial spectrum. The reduced form exhibits inhibitory activity against anaerobic bacteria, in contrast to the minimal antimicrobial activity of the disulfide-linked oxidized form. The formation of higher-order nanonets and bacterial entrapment is independent of the redox state. In terms of tissue distribution, expressed in Paneth cells of the small intestine (at protein level).

The protein localises to the secreted. It is found in the cytoplasmic vesicle. It localises to the secretory vesicle. Host-defense peptide that contributes to intestinal innate immunity and mediates homeostasis at mucosal surfaces by forming higher-order oligomers that capture bacteria and prevent microbial invasion of the epithelium. After binding to bacterial surface proteins, undergoes ordered self-assembly to form fibril-like nanonets that surround and entangle bacteria and thereby prevent bacterial invasion across the epithelial barrier. Entangles and agglutinates Gram-negative bacteria, such as E.coli, S.typhimurium and Y.enterocolitica, and Gram-positive bacteria such as L.monocytogenes, thereby protecting the intestine against invasion by enteric bacterial pathogens. Blocks adhesion of C.albicans to intestinal epithelial cells and thereby suppresses fungal invasion of epithelial cells and biofilm formation. Under reducing conditions and in an acidic environment similar to the intestinal milieu, exhibits inhibitory activity against anaerobic bacteria such as B.adolescentis, L.acidophilus and B.breve, as well as B.longum and S.thermophilus, possibly by leading to alterations in bacterial cell envelope structures. The disulfide-linked oxidized form exhibits negligible antimicrobial activity against Gram-negative and Gram-positive bacteria, as compared to the enteric defensin DEFA5. This Homo sapiens (Human) protein is Defensin-6 (DEFA6).